Reading from the N-terminus, the 207-residue chain is NADH-ubiquinone oxidoreductase chain 6 (207 aa).

The next 5 helical transmembrane spans lie at 15–35 (ILLDIISILSIISSIAIILVS), 40–60 (SILYLIILFINIAIYLYLIGI), 66–86 (LYILVYIGAIAVLFLFILSLF), 116–136 (LFILIIIIFYYNMINYFNNIY), and 184–204 (ILLIFISFLLLFSILSAIVLT).

This sequence belongs to the complex I subunit 6 family.

The protein resides in the mitochondrion membrane. The catalysed reaction is a ubiquinone + NADH + 5 H(+)(in) = a ubiquinol + NAD(+) + 4 H(+)(out). Core subunit of the mitochondrial membrane respiratory chain NADH dehydrogenase (Complex I) that is believed to belong to the minimal assembly required for catalysis. Complex I functions in the transfer of electrons from NADH to the respiratory chain. The immediate electron acceptor for the enzyme is believed to be ubiquinone. The polypeptide is NADH-ubiquinone oxidoreductase chain 6 (ND6) (Wickerhamomyces canadensis (Yeast)).